The primary structure comprises 235 residues: Fibrillarin-like rRNA/tRNA 2'-O-methyltransferase (235 aa).

S-adenosyl-L-methionine-binding positions include 91–92 (TT), 110–111 (EF), 137–138 (DA), and 157–160 (DVAQ).

This sequence belongs to the methyltransferase superfamily. Fibrillarin family. In terms of assembly, interacts with nop5. Component of box C/D small ribonucleoprotein (sRNP) particles that contain rpl7ae, FlpA and nop5, plus a guide RNA.

Functionally, involved in pre-rRNA and tRNA processing. Utilizes the methyl donor S-adenosyl-L-methionine to catalyze the site-specific 2'-hydroxyl methylation of ribose moieties in rRNA and tRNA. Site specificity is provided by a guide RNA that base pairs with the substrate. Methylation occurs at a characteristic distance from the sequence involved in base pairing with the guide RNA. This chain is Fibrillarin-like rRNA/tRNA 2'-O-methyltransferase, found in Pyrobaculum neutrophilum (strain DSM 2338 / JCM 9278 / NBRC 100436 / V24Sta) (Thermoproteus neutrophilus).